A 423-amino-acid polypeptide reads, in one-letter code: Gamma-glutamyl phosphate reductase (423 aa).

It belongs to the gamma-glutamyl phosphate reductase family.

Its subcellular location is the cytoplasm. It catalyses the reaction L-glutamate 5-semialdehyde + phosphate + NADP(+) = L-glutamyl 5-phosphate + NADPH + H(+). The protein operates within amino-acid biosynthesis; L-proline biosynthesis; L-glutamate 5-semialdehyde from L-glutamate: step 2/2. Catalyzes the NADPH-dependent reduction of L-glutamate 5-phosphate into L-glutamate 5-semialdehyde and phosphate. The product spontaneously undergoes cyclization to form 1-pyrroline-5-carboxylate. The chain is Gamma-glutamyl phosphate reductase from Pseudomonas putida (strain ATCC 700007 / DSM 6899 / JCM 31910 / BCRC 17059 / LMG 24140 / F1).